A 101-amino-acid polypeptide reads, in one-letter code: RNA silencing suppressor (101 aa).

The tract at residues 47-50 (RRRR) is basic. The C4-type zinc finger occupies 57–78 (CPRCARVSPGFYFTTRCDGKTC).

The protein belongs to the carlaviruses nucleic acid-binding protein family.

Its function is as follows. Suppressor of viral-induced RNA silencing. The potential mechanism of action is based on sequestering siRNAs. This chain is RNA silencing suppressor (TUC), found in Dianthus caryophyllus (Carnation).